The following is a 653-amino-acid chain: Thioredoxin domain-containing protein 3 homolog (653 aa).

Positions 9-114 (LQETLNTQEA…QETIQETLKN (106 aa)) constitute a Thioredoxin domain. Cysteines 38 and 41 form a disulfide. Residues 155 to 299 (KQITVALIKP…FFFPDFKPPT (145 aa)) are NDK 1. The disordered stretch occupies residues 300–323 (YRSAKSAASRASGRRSKTPSQKPR). A compositionally biased stretch (low complexity) spans 301–310 (RSAKSAASRA). 2 NDK regions span residues 324–459 (LQRT…IFHV) and 459–597 (VEQT…QFDW). The interval 603 to 653 (QAEEGEVNETSGEQPTDEQSGETEKTEEDGEHEGAQSDQQQAVSEAMEKEE) is disordered. The span at 617–633 (PTDEQSGETEKTEEDGE) shows a compositional bias: acidic residues.

The protein in the C-terminal section; belongs to the NDK family. Testis-specific.

Functionally, may be required during the final stages of sperm tail maturation. May act by reducing disulfide bonds within the sperm components. This Ciona intestinalis (Transparent sea squirt) protein is Thioredoxin domain-containing protein 3 homolog (CiIC3).